The following is a 373-amino-acid chain: Sodium-dependent organic anion transporter (373 aa).

A compositionally biased stretch (polar residues) spans 1–15 (MSTDCAGNSTCPVNS). The segment at 1–21 (MSTDCAGNSTCPVNSTEEDPP) is disordered. The Extracellular portion of the chain corresponds to 1–32 (MSTDCAGNSTCPVNSTEEDPPVGMEGHANLKL). Asparagine 8 and asparagine 14 each carry an N-linked (GlcNAc...) asparagine glycan. Residues 33-53 (LFTVLSAVMVGLVMFSFGCSV) traverse the membrane as a helical segment. Over 54–67 (ESQKLWLHLRRPWG) the chain is Cytoplasmic. A helical membrane pass occupies residues 68 to 88 (IAVGLLSQFGLMPLTAYLLAI). Residues 89–97 (GFGLKPFQA) lie on the Extracellular side of the membrane. The helical transmembrane segment at 98-118 (IAVLMMGSCPGGTISNVLTFW) threads the bilayer. The Cytoplasmic portion of the chain corresponds to 119–126 (VDGDMDLS). A helical transmembrane segment spans residues 127–147 (ISMTTCSTVAALGMMPLCLYI). The Extracellular portion of the chain corresponds to 148–157 (YTRSWTLTQN). The chain crosses the membrane as a helical span at residues 158 to 178 (LVIPYQSIGITLVSLVVPVAS). Residues 179 to 195 (GVYVNYRWPKQATVILK) lie on the Cytoplasmic side of the membrane. A helical membrane pass occupies residues 196 to 216 (VGAILGGMLLLVVAVTGMVLA). Residues 217–224 (KGWNTDVT) are Extracellular-facing. Residues 225–245 (LLVISCIFPLVGHVTGFLLAF) traverse the membrane as a helical segment. Residues 246–265 (LTHQSWQRCRTISIETGAQN) are Cytoplasmic-facing. Residues 266–283 (IQLCIAMLQLSFSAEYLV) traverse the membrane as a helical segment. Residue glutamine 284 is a topological domain, extracellular. A helical membrane pass occupies residues 285 to 305 (LLNFALAYGLFQVLHGLLIVA). Residues 306–373 (AYQAYKRRQK…ELTSHIPSCE (68 aa)) are Cytoplasmic-facing.

The protein belongs to the bile acid:sodium symporter (BASS) (TC 2.A.28) family. Post-translationally, glycosylated. In terms of tissue distribution, highest expression in lung and testis, moderate expression in heart, bladder and skin, and low expression in blood, liver, stomach, small intestine, spleen, kidney, adrenal gland, seminal vesicle, preputial gland, coagulating gland, lacrimal gland/eye, and brain.

It is found in the membrane. The enzyme catalyses estrone 3-sulfate(out) + 2 Na(+)(out) = estrone 3-sulfate(in) + 2 Na(+)(in). It catalyses the reaction 17beta-estradiol 3-sulfate(out) + 2 Na(+)(out) = 17beta-estradiol 3-sulfate(in) + 2 Na(+)(in). The catalysed reaction is dehydroepiandrosterone 3-sulfate(out) + 2 Na(+)(out) = dehydroepiandrosterone 3-sulfate(in) + 2 Na(+)(in). It carries out the reaction androst-5-ene-diol 3-sulfate(out) + 2 Na(+)(out) = androst-5-ene-diol 3-sulfate(in) + 2 Na(+)(in). The enzyme catalyses pregnenolone sulfate(out) + 2 Na(+)(out) = pregnenolone sulfate(in) + 2 Na(+)(in). It catalyses the reaction taurolithocholate 3-sulfate(out) + 2 Na(+)(out) = taurolithocholate 3-sulfate(in) + 2 Na(+)(in). The catalysed reaction is androsterone 3alpha-sulfate(out) + 2 Na(+)(out) = androsterone 3alpha-sulfate(in) + 2 Na(+)(in). It carries out the reaction 5alpha-dihydrotestosterone sulfate(out) + 2 Na(+)(out) = 5alpha-dihydrotestosterone sulfate(in) + 2 Na(+)(in). The enzyme catalyses 17beta-estradiol 17-sulfate(out) + 2 Na(+)(out) = 17beta-estradiol 17-sulfate(in) + 2 Na(+)(in). It catalyses the reaction 17alpha-hydroxypregnenolone 3-sulfate(out) + 2 Na(+)(out) = 17alpha-hydroxypregnenolone 3-sulfate(in) + 2 Na(+)(in). The catalysed reaction is epiandrosterone 3-sulfate(out) + 2 Na(+)(out) = epiandrosterone 3-sulfate(in) + 2 Na(+)(in). It carries out the reaction epitestosterone 17-sulfate(out) + 2 Na(+)(out) = epitestosterone 17-sulfate(in) + 2 Na(+)(in). The enzyme catalyses testosterone 17-sulfate(out) + 2 Na(+)(out) = testosterone 17-sulfate(in) + 2 Na(+)(in). It catalyses the reaction 16alpha-hydroxydehydroepiandrosterone 3-sulfate(out) + 2 Na(+)(out) = 16alpha-hydroxydehydroepiandrosterone 3-sulfate(in) + 2 Na(+)(in). In terms of biological role, transports sulfoconjugated steroid hormones from the extracellular compartment into the cytosol in a sodium-dependent manner without hydrolysis. Steroid sulfate hormones are commonly considered to be biologically inactive metabolites, that may be activated by steroid sulfatases into free steroids. May play an important role by delivering sulfoconjugated steroids to specific target cells in reproductive organs. May play a role transporting the estriol precursor 16alpha-hydroxydehydroepiandrosterone 3-sulfate (16a-OH-DHEAS) at the fetal blood vessel endothelium. Can also transport other sulfoconjugated molecules such as taurolithocholic acid-3-sulfate and sulfoconjugated pyrenes. The sequence is that of Sodium-dependent organic anion transporter (Slc10a6) from Mus musculus (Mouse).